A 902-amino-acid polypeptide reads, in one-letter code: Viral-enhancing factor (902 aa).

Residues 27-330 (HRRTEVGVVL…IFAWLYNPQR (304 aa)) form the Peptidase M60 domain. Asn73, Asn265, Asn278, Asn339, Asn540, Asn593, Asn594, Asn620, Asn782, and Asn840 each carry an N-linked (GlcNAc...) asparagine; by host glycan.

Functionally, involved in disruption of the peritrophic membrane and fusion of nucleocapsids with midgut cells. The chain is Viral-enhancing factor (VEF) from Heliothis (HaGV).